We begin with the raw amino-acid sequence, 493 residues long: Galactose-1-phosphate uridylyltransferase (493 aa).

It belongs to the galactose-1-phosphate uridylyltransferase type 2 family.

It localises to the cytoplasm. It carries out the reaction alpha-D-galactose 1-phosphate + UDP-alpha-D-glucose = alpha-D-glucose 1-phosphate + UDP-alpha-D-galactose. It functions in the pathway carbohydrate metabolism; galactose metabolism. The protein is Galactose-1-phosphate uridylyltransferase of Lactococcus lactis subsp. cremoris (strain MG1363).